Reading from the N-terminus, the 748-residue chain is CCR4-NOT transcription complex subunit 10-A (748 aa).

Positions 1 to 17 are enriched in basic and acidic residues; sequence MAADKAGEQGAEKHEDS. 4 disordered regions span residues 1 to 25, 184 to 205, 483 to 524, and 605 to 635; these read MAAD…GISD, SNNK…EPFA, KQEN…PPSS, and VSLG…QMPQ. A compositionally biased stretch (low complexity) spans 185–200; the sequence is NNKNGKNNETNSNANN. Composition is skewed to polar residues over residues 487 to 509 and 605 to 615; these read GSKT…VCSN and VSLGVSSNEQE.

The protein belongs to the CNOT10 family. Component of the CCR4-NOT complex. cnot10 and cnot11 form a subcomplex docked to the cnot1 scaffold.

It is found in the cytoplasm. It localises to the nucleus. In terms of biological role, component of the CCR4-NOT complex which is one of the major cellular mRNA deadenylases and is linked to various cellular processes including bulk mRNA degradation, miRNA-mediated repression, translational repression during translational initiation and general transcription regulation. Additional complex functions may be a consequence of its influence on mRNA expression. Is not required for association of CNOT7 to the CCR4-NOT complex. The polypeptide is CCR4-NOT transcription complex subunit 10-A (cnot10-a) (Xenopus laevis (African clawed frog)).